The primary structure comprises 44 residues: Small, acid-soluble spore protein N (44 aa).

The disordered stretch occupies residues 1–44 (MGNPKKNSKDFVPNHIGTQSKKAGGNKGKQMQDTTGKQPIVDNG).

This sequence belongs to the SspN family.

Its subcellular location is the spore core. The protein is Small, acid-soluble spore protein N of Bacillus cytotoxicus (strain DSM 22905 / CIP 110041 / 391-98 / NVH 391-98).